The following is a 372-amino-acid chain: Tubby-like F-box protein 9 (372 aa).

Residues 1–51 (MALWRCSSSWLSSVSRSSGGVGGGESKVSPEIAPVSGGEGEGEEEEGEEER) form a disordered region. Low complexity predominate over residues 7 to 18 (SSSWLSSVSRSS). Positions 40–49 (GEGEEEEGEE) are enriched in acidic residues. The F-box domain maps to 50 to 105 (ERWSRLLPELLTEIMRRVDAGAERWPPRRDVVACACVCRRWRDAAVSVVRPPLECG).

The protein belongs to the TUB family. In terms of tissue distribution, ubiquitous.

This is Tubby-like F-box protein 9 (TULP9) from Oryza sativa subsp. japonica (Rice).